We begin with the raw amino-acid sequence, 28 residues long: Grammistin Gs A (28 aa).

This sequence belongs to the grammistin family. Group 3 subfamily. In terms of assembly, exists as aggregates of 3-4 molecules. As to expression, expressed by the skin glands.

Its subcellular location is the secreted. Its function is as follows. Thanks to its amphiphilic alpha-helice(s), it may integrate into membrane phospholipids, leading to lysis of the membrane. Has no substantial hemolytic activity. Has antibacterial activity with a broad spectrum against various species of bacteria including both Gram-positive and Gram-negative groups. The sequence is that of Grammistin Gs A from Grammistes sexlineatus (Goldenstriped soapfish).